The sequence spans 618 residues: Dihydroxy-acid dehydratase (618 aa).

Asp-81 is a Mg(2+) binding site. Cys-122 is a [2Fe-2S] cluster binding site. Residues Asp-123 and Lys-124 each coordinate Mg(2+). At Lys-124 the chain carries N6-carboxylysine. Position 195 (Cys-195) interacts with [2Fe-2S] cluster. A Mg(2+)-binding site is contributed by Glu-493. Catalysis depends on Ser-519, which acts as the Proton acceptor.

The protein belongs to the IlvD/Edd family. Homodimer. [2Fe-2S] cluster serves as cofactor. It depends on Mg(2+) as a cofactor.

It carries out the reaction (2R)-2,3-dihydroxy-3-methylbutanoate = 3-methyl-2-oxobutanoate + H2O. It catalyses the reaction (2R,3R)-2,3-dihydroxy-3-methylpentanoate = (S)-3-methyl-2-oxopentanoate + H2O. It participates in amino-acid biosynthesis; L-isoleucine biosynthesis; L-isoleucine from 2-oxobutanoate: step 3/4. The protein operates within amino-acid biosynthesis; L-valine biosynthesis; L-valine from pyruvate: step 3/4. Functionally, functions in the biosynthesis of branched-chain amino acids. Catalyzes the dehydration of (2R,3R)-2,3-dihydroxy-3-methylpentanoate (2,3-dihydroxy-3-methylvalerate) into 2-oxo-3-methylpentanoate (2-oxo-3-methylvalerate) and of (2R)-2,3-dihydroxy-3-methylbutanoate (2,3-dihydroxyisovalerate) into 2-oxo-3-methylbutanoate (2-oxoisovalerate), the penultimate precursor to L-isoleucine and L-valine, respectively. This Shewanella amazonensis (strain ATCC BAA-1098 / SB2B) protein is Dihydroxy-acid dehydratase.